Here is a 138-residue protein sequence, read N- to C-terminus: Oleosin G (138 aa).

Helical transmembrane passes span 14–34 (ILGF…TGLT), 48–68 (VLIF…VAVA), and 69–89 (GFLS…WLYN). Residues 47–58 (PVLIFFSPILIP) carry the Proline-knot motif.

The protein belongs to the oleosin family. As to expression, expressed in megagametophytes (at protein level).

Its subcellular location is the lipid droplet. It localises to the membrane. This Pinus massoniana (Chinese red pine) protein is Oleosin G.